Reading from the N-terminus, the 814-residue chain is Rap guanine nucleotide exchange factor 5 (814 aa).

Positions 43–118 (LQAADLVKDR…DNYVFYQFSS (76 aa)) constitute a DEP domain. In terms of domain architecture, N-terminal Ras-GEF spans 301-434 (ARYVVVSGTP…ELKEFQKILG (134 aa)). Residues 578–813 (NTWDLALELM…FELSHRLEPR (236 aa)) enclose the Ras-GEF domain.

The protein localises to the nucleus. Its function is as follows. Guanine nucleotide exchange factor (GEF) for RAP1A, RAP2A and MRAS/M-Ras-GTP. Its association with MRAS inhibits Rap1 activation. In Mus musculus (Mouse), this protein is Rap guanine nucleotide exchange factor 5 (Rapgef5).